The chain runs to 229 residues: Urease accessory protein UreF (229 aa).

This sequence belongs to the UreF family. In terms of assembly, ureD, UreF and UreG form a complex that acts as a GTP-hydrolysis-dependent molecular chaperone, activating the urease apoprotein by helping to assemble the nickel containing metallocenter of UreC. The UreE protein probably delivers the nickel.

The protein resides in the cytoplasm. Required for maturation of urease via the functional incorporation of the urease nickel metallocenter. This Staphylococcus epidermidis (strain ATCC 35984 / DSM 28319 / BCRC 17069 / CCUG 31568 / BM 3577 / RP62A) protein is Urease accessory protein UreF.